Reading from the N-terminus, the 540-residue chain is Ubiquitin carboxyl-terminal hydrolase 17-like protein E (540 aa).

Residues 1 to 22 form a disordered region; that stretch reads MVVSLSFPEETGGENLPSAPLE. Residues 85–382 form the USP domain; it reads CGLQNTGNSC…NAYVLFYVQQ (298 aa). Cys-94 (nucleophile) is an active-site residue. His-341 serves as the catalytic Proton acceptor. 2 stretches are compositionally biased toward basic and acidic residues: residues 431 to 441 and 508 to 520; these read NREKRAKKETS and APDKENQPWHNGD. Disordered stretches follow at residues 431-461 and 499-540; these read NREKRAKKETSLGEGKVPQEVNHEKAGQKHG and RSTA…QGGR. Residues 523 to 540 show a composition bias toward polar residues; it reads LTSQGLMSPGQLCSQGGR.

Belongs to the peptidase C19 family. USP17 subfamily. As to quaternary structure, interacts with SUDS3; the interaction is direct.

Its subcellular location is the nucleus. The protein resides in the endoplasmic reticulum. The enzyme catalyses Thiol-dependent hydrolysis of ester, thioester, amide, peptide and isopeptide bonds formed by the C-terminal Gly of ubiquitin (a 76-residue protein attached to proteins as an intracellular targeting signal).. Deubiquitinating enzyme that removes conjugated ubiquitin from specific proteins to regulate different cellular processes that may include cell proliferation, progression through the cell cycle, apoptosis, cell migration, and the cellular response to viral infection. This Mus musculus (Mouse) protein is Ubiquitin carboxyl-terminal hydrolase 17-like protein E (Usp17le).